The chain runs to 180 residues: Type IV major pilin protein PilE1 (180 aa).

Positions Met-1–Gly-7 are excised as a propeptide. An N-methylphenylalanine modification is found at Phe-8. The helical transmembrane segment at Phe-8 to Leu-28 threads the bilayer. Ser-70 carries O-linked (GlcNAc...) serine glycosylation. A disulfide bridge connects residues Cys-128 and Cys-160.

It belongs to the N-Me-Phe pilin family. The pili are polar flexible filaments of about 5.4 nanometers diameter and 2.5 micrometers average length; they consist of only a single polypeptide chain arranged in a helical configuration of five subunits per turn in the assembled pilus.

The protein resides in the fimbrium. Its subcellular location is the membrane. Its function is as follows. Major component of the type IV pilus (T4P) that plays a role in cellular adherence, microcolony formation, resistance to neutrophil mediated killing, twitching motility as well as transformation. Mediates the attachment and the formation of bacterial microcolonies on host epithelial cells. Mechanistically, pili retractation induces host NF-kappa-B activation in infected cells, which is temporally associated with the formation of gonococcal microcolonies. The chain is Type IV major pilin protein PilE1 (pilE1) from Neisseria gonorrhoeae.